We begin with the raw amino-acid sequence, 79 residues long: Beta-defensin 15 (79 aa).

The first 20 residues, 1–20 (MKTFLFLFAVLFFLDPAKNA), serve as a signal peptide directing secretion. Cystine bridges form between Cys-26/Cys-53, Cys-33/Cys-47, and Cys-37/Cys-54.

It belongs to the beta-defensin family. In terms of tissue distribution, expressed in testis and to a lesser extent in epididymis (caput, corpus and cauda). Also weakly expressed in kidneys and colon.

It localises to the secreted. Its function is as follows. Has antibacterial activity. In Mus musculus (Mouse), this protein is Beta-defensin 15 (Defb15).